The following is a 303-amino-acid chain: Aquaporin NIP1-2 (303 aa).

The segment at 1-39 (MAGREDGAAAGAMEEGQDSKEVKCESSEDGSSSSSSSRC) is disordered. The span at 17–26 (QDSKEVKCES) shows a compositional bias: basic and acidic residues. The next 2 membrane-spanning stretches (helical) occupy residues 66–86 (ILAE…AVVV) and 91–111 (GGAV…MVLV). The short motif at 123-125 (NPA) is the NPA 1 element. Helical transmembrane passes span 145–165 (VVAQ…VFGG), 188–208 (AAAL…GVAT), and 212–232 (AIGE…VLFA). Residues 241–243 (NPA) carry the NPA 2 motif. A helical membrane pass occupies residues 255 to 275 (YGGVWVYVAAPVSGTVCGAWA).

Belongs to the MIP/aquaporin (TC 1.A.8) family. NIP (TC 1.A.8.12) subfamily. In terms of tissue distribution, expressed in roots and leaves, and at lower levels in anthers.

The protein resides in the membrane. Functionally, aquaporins facilitate the transport of water and small neutral solutes across cell membranes. The protein is Aquaporin NIP1-2 (NIP1-2) of Oryza sativa subsp. japonica (Rice).